The chain runs to 257 residues: Capsid protein (257 aa).

Belongs to the geminiviridae capsid protein family.

It localises to the virion. Its function is as follows. Encapsidates the viral DNA into characteristic twinned ('geminate') particles. Plays a role in protection of the genome from degradation, virus acquisition and transmission by insect vectors, infectivity, and systemic movement. This is Capsid protein from Capsicum annuum (Capsicum pepper).